A 385-amino-acid polypeptide reads, in one-letter code: Cotranscriptional regulator ARB2A homolog (385 aa).

Disordered regions lie at residues 1 to 65 (MSDI…NGEE) and 220 to 239 (EEQKEKAKEEEEKKDDNGKL). Residues 52–62 (NNNNNNSNNSN) are compositionally biased toward low complexity. Residues 220–238 (EEQKEKAKEEEEKKDDNGK) show a composition bias toward basic and acidic residues.

The protein belongs to the ARB2A family.

This chain is Cotranscriptional regulator ARB2A homolog, found in Dictyostelium discoideum (Social amoeba).